The sequence spans 239 residues: Isoprenyl transferase (239 aa).

The active site involves Asp16. Asp16 is a binding site for Mg(2+). Substrate-binding positions include 17 to 20, Trp21, Arg29, His33, and 61 to 63; these read GNGR and STE. The active-site Proton acceptor is the Asn64. Substrate is bound by residues Trp65, Arg67, Arg187, and 193 to 195; that span reads RLS. Glu206 lines the Mg(2+) pocket.

The protein belongs to the UPP synthase family. As to quaternary structure, homodimer. It depends on Mg(2+) as a cofactor.

Catalyzes the condensation of isopentenyl diphosphate (IPP) with allylic pyrophosphates generating different type of terpenoids. The protein is Isoprenyl transferase of Lactobacillus johnsonii (strain CNCM I-12250 / La1 / NCC 533).